The chain runs to 641 residues: ATP-dependent zinc metalloprotease FtsH (641 aa).

At 1–16 (MNKQQKPKRSPLRPDY) the chain is on the cytoplasmic side. The helical transmembrane segment at 17–37 (LVIVIIILLAIGMYFFFTEMM) threads the bilayer. The Extracellular portion of the chain corresponds to 38–131 (APKVKQFDEF…VSFVPHVSVD (94 aa)). A helical membrane pass occupies residues 132-152 (FWNIISTLLLIAAPIVLVVIM). Topologically, residues 153-641 (FRSMSSQSNK…EVEEDSKKSE (489 aa)) are cytoplasmic. 222-229 (GQPGTGKT) serves as a coordination point for ATP. A Zn(2+)-binding site is contributed by histidine 444. Residue glutamate 445 is part of the active site. Zn(2+) contacts are provided by histidine 448 and aspartate 520.

The protein in the central section; belongs to the AAA ATPase family. It in the C-terminal section; belongs to the peptidase M41 family. As to quaternary structure, homohexamer. Requires Zn(2+) as cofactor.

Its subcellular location is the cell membrane. Acts as a processive, ATP-dependent zinc metallopeptidase for both cytoplasmic and membrane proteins. Plays a role in the quality control of integral membrane proteins. In Acholeplasma laidlawii (strain PG-8A), this protein is ATP-dependent zinc metalloprotease FtsH.